A 118-amino-acid polypeptide reads, in one-letter code: Large ribosomal subunit protein bL20 (118 aa).

The protein belongs to the bacterial ribosomal protein bL20 family.

Functionally, binds directly to 23S ribosomal RNA and is necessary for the in vitro assembly process of the 50S ribosomal subunit. It is not involved in the protein synthesizing functions of that subunit. This chain is Large ribosomal subunit protein bL20, found in Shigella flexneri serotype 5b (strain 8401).